Reading from the N-terminus, the 210-residue chain is MPPYTIVYFPVRGRCEAMRILLADQGQSWKEEVVTVETWRKGSLKSTCLYGQLPKFEDGDLTLYQSNAILRHLGRSLGLYGKDQREAALVDMVNDGVEDLRCKYITLIYTKYEEGKDDYVKALPGHLKPFETLLSQNQGGKAFIVGDQISFVDYNLLDLLLIHQVLAPGCLDNFPLLSAYVARLSARPKIKAFLSSPDHVNRPINGNGKQ.

One can recognise a GST N-terminal domain in the interval 2–81; it reads PPYTIVYFPV…HLGRSLGLYG (80 aa). At Y4 the chain carries Phosphotyrosine; by EGFR. Glutathione is bound by residues Y8, R14, W39, K45, and 52 to 53; that span reads QL. A Phosphothreonine modification is found at T62. 65 to 66 is a binding site for glutathione; sequence QS. Positions 83 to 204 constitute a GST C-terminal domain; that stretch reads DQREAALVDM…SSPDHVNRPI (122 aa). An N6-succinyllysine mark is found at K103 and K116. K128 carries the N6-acetyllysine modification.

Belongs to the GST superfamily. Pi family. In terms of assembly, homodimer. Interacts with CDK5.

The protein resides in the cytoplasm. The protein localises to the mitochondrion. Its subcellular location is the nucleus. It carries out the reaction RX + glutathione = an S-substituted glutathione + a halide anion + H(+). The catalysed reaction is prostaglandin J2 + glutathione = prostaglandin J2-S-(R)-glutathione. The enzyme catalyses prostaglandin J2 + glutathione = prostaglandin J2-S-(S)-glutathione. It catalyses the reaction prostaglandin A2 + glutathione = prostaglandin A2-S-(S)-glutathione. It carries out the reaction 11(S)-hydroxy-14(S),15(S)-epoxy-(5Z,8Z,12E)-eicosatrienoate + glutathione = (11S,15S)-dihydroxy-14(R)-S-glutathionyl-(5Z,8Z,12E)-eicosatrienoate. Conjugation of reduced glutathione to a wide number of exogenous and endogenous hydrophobic electrophiles. Involved in the formation of glutathione conjugates of both prostaglandin A2 (PGA2) and prostaglandin J2 (PGJ2). Participates in the formation of novel hepoxilin regioisomers. Negatively regulates CDK5 activity via p25/p35 translocation to prevent neurodegeneration. The polypeptide is Glutathione S-transferase P (GSTP1) (Cricetulus longicaudatus (Long-tailed dwarf hamster)).